Reading from the N-terminus, the 111-residue chain is T cell receptor beta variable 29-1 (111 aa).

An N-terminal signal peptide occupies residues 1–16 (MLSLLLLLLGLGSVFS). In terms of domain architecture, Ig-like spans 17–111 (AVISQKPSRD…DSSIYLCSVE (95 aa)). Cysteine 38 and cysteine 108 are joined by a disulfide. The N-linked (GlcNAc...) asparagine glycan is linked to asparagine 87.

In terms of assembly, alpha-beta TR is a heterodimer composed of an alpha and beta chain; disulfide-linked. The alpha-beta TR is associated with the transmembrane signaling CD3 coreceptor proteins to form the TR-CD3 (TcR or TCR). The assembly of alpha-beta TR heterodimers with CD3 occurs in the endoplasmic reticulum where a single alpha-beta TR heterodimer associates with one CD3D-CD3E heterodimer, one CD3G-CD3E heterodimer and one CD247 homodimer forming a stable octameric structure. CD3D-CD3E and CD3G-CD3E heterodimers preferentially associate with TR alpha and TR beta chains, respectively. The association of the CD247 homodimer is the last step of TcR assembly in the endoplasmic reticulum and is required for transport to the cell surface.

The protein resides in the cell membrane. In terms of biological role, v region of the variable domain of T cell receptor (TR) beta chain that participates in the antigen recognition. Alpha-beta T cell receptors are antigen specific receptors which are essential to the immune response and are present on the cell surface of T lymphocytes. Recognize peptide-major histocompatibility (MH) (pMH) complexes that are displayed by antigen presenting cells (APC), a prerequisite for efficient T cell adaptive immunity against pathogens. Binding of alpha-beta TR to pMH complex initiates TR-CD3 clustering on the cell surface and intracellular activation of LCK that phosphorylates the ITAM motifs of CD3G, CD3D, CD3E and CD247 enabling the recruitment of ZAP70. In turn ZAP70 phosphorylates LAT, which recruits numerous signaling molecules to form the LAT signalosome. The LAT signalosome propagates signal branching to three major signaling pathways, the calcium, the mitogen-activated protein kinase (MAPK) kinase and the nuclear factor NF-kappa-B (NF-kB) pathways, leading to the mobilization of transcription factors that are critical for gene expression and essential for T cell growth and differentiation. The T cell repertoire is generated in the thymus, by V-(D)-J rearrangement. This repertoire is then shaped by intrathymic selection events to generate a peripheral T cell pool of self-MH restricted, non-autoaggressive T cells. Post-thymic interaction of alpha-beta TR with the pMH complexes shapes TR structural and functional avidity. This Homo sapiens (Human) protein is T cell receptor beta variable 29-1.